The sequence spans 254 residues: Leucyl/phenylalanyl-tRNA--protein transferase (254 aa).

It belongs to the L/F-transferase family.

Its subcellular location is the cytoplasm. It carries out the reaction N-terminal L-lysyl-[protein] + L-leucyl-tRNA(Leu) = N-terminal L-leucyl-L-lysyl-[protein] + tRNA(Leu) + H(+). The enzyme catalyses N-terminal L-arginyl-[protein] + L-leucyl-tRNA(Leu) = N-terminal L-leucyl-L-arginyl-[protein] + tRNA(Leu) + H(+). It catalyses the reaction L-phenylalanyl-tRNA(Phe) + an N-terminal L-alpha-aminoacyl-[protein] = an N-terminal L-phenylalanyl-L-alpha-aminoacyl-[protein] + tRNA(Phe). Its function is as follows. Functions in the N-end rule pathway of protein degradation where it conjugates Leu, Phe and, less efficiently, Met from aminoacyl-tRNAs to the N-termini of proteins containing an N-terminal arginine or lysine. This chain is Leucyl/phenylalanyl-tRNA--protein transferase, found in Burkholderia cenocepacia (strain HI2424).